The chain runs to 91 residues: Small ribosomal subunit protein uS19 (91 aa).

The protein belongs to the universal ribosomal protein uS19 family.

Its function is as follows. Protein S19 forms a complex with S13 that binds strongly to the 16S ribosomal RNA. The chain is Small ribosomal subunit protein uS19 from Halorhodospira halophila (strain DSM 244 / SL1) (Ectothiorhodospira halophila (strain DSM 244 / SL1)).